Here is a 234-residue protein sequence, read N- to C-terminus: Adenosine 5'-phosphosulfate reductase (234 aa).

Residues Cys-120, Cys-121, Cys-203, and Cys-206 each contribute to the [4Fe-4S] cluster site. The active-site Nucleophile; cysteine thiosulfonate intermediate is the Cys-229.

It belongs to the PAPS reductase family. CysH subfamily. Requires [4Fe-4S] cluster as cofactor.

Its subcellular location is the cytoplasm. It carries out the reaction [thioredoxin]-disulfide + sulfite + AMP + 2 H(+) = adenosine 5'-phosphosulfate + [thioredoxin]-dithiol. Its pathway is sulfur metabolism; hydrogen sulfide biosynthesis; sulfite from sulfate. Functionally, catalyzes the formation of sulfite from adenosine 5'-phosphosulfate (APS) using thioredoxin as an electron donor. This is Adenosine 5'-phosphosulfate reductase from Bacillus thuringiensis (strain Al Hakam).